Here is a 31-residue protein sequence, read N- to C-terminus: Photosystem II reaction center protein T (31 aa).

Residues 3–23 traverse the membrane as a helical segment; the sequence is ALVYTFLLVGTLGIIFFAIFF.

It belongs to the PsbT family. As to quaternary structure, PSII is composed of 1 copy each of membrane proteins PsbA, PsbB, PsbC, PsbD, PsbE, PsbF, PsbH, PsbI, PsbJ, PsbK, PsbL, PsbM, PsbT, PsbY, PsbZ, Psb30/Ycf12, at least 3 peripheral proteins of the oxygen-evolving complex and a large number of cofactors. It forms dimeric complexes.

It localises to the plastid. The protein localises to the chloroplast thylakoid membrane. Found at the monomer-monomer interface of the photosystem II (PS II) dimer, plays a role in assembly and dimerization of PSII. PSII is a light-driven water plastoquinone oxidoreductase, using light energy to abstract electrons from H(2)O, generating a proton gradient subsequently used for ATP formation. The polypeptide is Photosystem II reaction center protein T (Mesostigma viride (Green alga)).